A 1013-amino-acid chain; its full sequence is Nucleotide-binding oligomerization domain-containing protein 2 (1013 aa).

CARD domains lie at 1-82 and 107-178; these read MCSQ…AVQE and LQSH…HVQK. The short motif at 36–50 is the ATG16L1-binding motif element; it reads WEVLSWEDYEGLRLV. Residues threonine 212, tyrosine 225, threonine 226, glycine 275, serine 276, glycine 277, lysine 278, serine 279, and threonine 280 each contribute to the ADP site. The segment at 214 to 247 is required for CARD9 binding; it reads DGAENLCLEDIYTENTLEVRTEVGMAGPLHKSPA. Residues 266–402 enclose the NACHT domain; sequence DTVLVVGEAG…RKVLTSRPDA (137 aa). 272–279 provides a ligand contact to ATP; it reads GEAGSGKS. The S-palmitoyl cysteine moiety is linked to residue cysteine 368. Histidine 576 is a binding site for ADP. LRR repeat units follow at residues 764–785, 789–812, 817–838, 845–857, 873–893, 901–922, 929–949, 957–978, and 985–1005; these read RPVA…QLLP, ACKA…IEHA, QLQK…SVAQ, NFLA…NHIT, SLQF…QALA, SLKW…ALAS, ALEE…CSLA, SLKV…ALLQ, and TILE…EALS.

The protein belongs to the NOD1-NOD2 family. In terms of assembly, homooligomer: homooligomerizes following muramyl dipeptide (MDP)-binding, promoting RIPK2 recruitment. Interacts (via CARD domain) with RIPK2 (via CARD domain). Following RIPK2 recruitment, RIPK2 homooligomerizes via its CARD domain and forms long filaments named RIPosomes. Interacts (via CARD domain) with ubiquitin; inhibiting interaction with RIPK2. Component of a signaling complex consisting of ARHGEF2, NOD2 and RIPK2. Interacts with ANKRD17 (via N-terminus). Interacts with HSPA1A; the interaction enhances NOD2 stability. Interacts (via both CARD domains) with HSP90; the interaction enhances NOD2 stability. Interacts (via CARD domain) with SOCS3; the interaction promotes NOD2 degradation. Interacts (via CARD domain) with ERBIN; the interaction inhibits activation of NOD2. Interacts with MAPKBP1; the interaction is enhanced in the presence of muramyl dipeptide (MDP) and inhibits NOD2 homooligomerization and activation. Interacts with INAVA; the interaction takes place upon Pattern recognition receptor (PRR) stimulation. Interacts (via NACHT domain) with CARD9. Interacts (via CARD domain) with CASP1; this interaction leads to IL1B processing. Also interacts with CASP4. Interacts with NLRP1; this interaction is enhanced in the presence of muramyl dipeptide (MDP) and leads to increased IL1B release. Interacts with NLRP12; this interaction promotes degradation of NOD2 through the ubiquitin-proteasome pathway. Interacts with ANKHD1, C10orf67, CHMP5, DOCK7, ENTR1, KRT15, LDOC1, PPP1R12C, PPP2R3B, TRIM41 and VIM. Interacts with MAVS; interaction takes place following single-stranded RNA (ssRNA)-binding. Interacts with ATG16L1. Interacts with IRGM; promoting IRGM 'Lys-63'-linked polyubiquitination, which is required for interactions with the core autophagy factors. Post-translationally, palmitoylated by ZDHHC5; palmitoylation is required for proper recruitment to the bacterial entry site and hence for proper signaling upon cognate peptidoglycan detection. Palmitoylation promotes localization to the cell membrane. Palmitoylation protects from SQSTM1/p62-dependent autophagic degradation. In terms of processing, polyubiquitinated by TRIM27, leading to proteasome-mediated degradation. Polyubiquitinated and degraded following muramyl dipeptide (MDP) stimulation, conferring MDP tolerance and preventing septic shock. Degraded via selective autophagy following interaction with IRGM. IRGM promotes NOD2-RIPK2 RIPosome recruitment to autophagosome membranes, promoting their SQSTM1/p62-dependent autophagic degradation. Post-translationally, O-glycosylated by OGT, O-GlcNAcylation increases protein stability.

The protein resides in the cell membrane. The protein localises to the basolateral cell membrane. Its subcellular location is the cytoplasm. It is found in the mitochondrion. ADP-binding promotes an inactive closed conformation. Functionally, pattern recognition receptor (PRR) that detects bacterial peptidoglycan fragments and other danger signals and plays an important role in gastrointestinal immunity. Specifically activated by muramyl dipeptide (MDP), a fragment of bacterial peptidoglycan found in every bacterial peptidoglycan type. NOD2 specifically recognizes and binds 6-O-phospho-MDP, the phosphorylated form of MDP, which is generated by NAGK. 6-O-phospho-MDP-binding triggers oligomerization that facilitates the binding and subsequent activation of the proximal adapter receptor-interacting RIPK2. Following recruitment, RIPK2 undergoes 'Met-1'- (linear) and 'Lys-63'-linked polyubiquitination by E3 ubiquitin-protein ligases XIAP, BIRC2, BIRC3 and the LUBAC complex, becoming a scaffolding protein for downstream effectors, triggering activation of the NF-kappa-B and MAP kinases signaling. This in turn leads to the transcriptional activation of hundreds of genes involved in immune response. Its ability to detect bacterial MDP plays a central role in maintaining the equilibrium between intestinal microbiota and host immune responses to control inflammation. An imbalance in this relationship results in dysbiosis, whereby pathogenic bacteria prevail on commensals, causing damage in the intestinal epithelial barrier as well as allowing bacterial invasion and inflammation. Acts as a regulator of appetite by sensing MDP in a subset of brain neurons: microbiota-derived MDP reach the brain, where they bind and activate NOD2 in inhibitory hypothalamic neurons, decreasing neuronal activity, thereby regulating satiety and body temperature. NOD2-dependent MDP-sensing of bacterial cell walls in the intestinal epithelial compartment contributes to sustained postnatal growth upon undernutrition. Also plays a role in antiviral response by acting as a sensor of single-stranded RNA (ssRNA) from viruses: upon ssRNA-binding, interacts with MAVS, leading to activation of interferon regulatory factor-3/IRF3 and expression of type I interferon. Also acts as a regulator of autophagy in dendritic cells via its interaction with ATG16L1, possibly by recruiting ATG16L1 at the site of bacterial entry. NOD2 activation in the small intestine crypt also contributes to intestinal stem cells survival and function: acts by promoting mitophagy via its association with ATG16L1. In addition to its main role in innate immunity, also regulates the adaptive immune system by acting as regulator of helper T-cell and regulatory T-cells (Tregs). Besides recognizing pathogens, also involved in the endoplasmic reticulum stress response: acts by sensing and binding to the cytosolic metabolite sphingosine-1-phosphate generated in response to endoplasmic reticulum stress, initiating an inflammation process that leads to activation of the NF-kappa-B and MAP kinases signaling. May also be involved in NLRP1 activation following activation by MDP, leading to CASP1 activation and IL1B release in macrophages. The protein is Nucleotide-binding oligomerization domain-containing protein 2 of Oryctolagus cuniculus (Rabbit).